The primary structure comprises 509 residues: Probable cytochrome P450 519B1 (509 aa).

A helical membrane pass occupies residues 1–21 (MNLINLILYFILFWIVFDFIR). Cys-456 contributes to the heme binding site.

The protein belongs to the cytochrome P450 family. It depends on heme as a cofactor.

It localises to the membrane. This Dictyostelium discoideum (Social amoeba) protein is Probable cytochrome P450 519B1 (cyp519B1).